The sequence spans 253 residues: Triosephosphate isomerase (253 aa).

Position 9–11 (9–11 (NWK)) interacts with substrate. His95 acts as the Electrophile in catalysis. Glu167 (proton acceptor) is an active-site residue. Substrate is bound by residues Gly173, Ser213, and 234–235 (GG). Ser213 carries the phosphoserine modification.

Belongs to the triosephosphate isomerase family. Homodimer.

The protein resides in the cytoplasm. It carries out the reaction D-glyceraldehyde 3-phosphate = dihydroxyacetone phosphate. Its pathway is carbohydrate biosynthesis; gluconeogenesis. It participates in carbohydrate degradation; glycolysis; D-glyceraldehyde 3-phosphate from glycerone phosphate: step 1/1. In terms of biological role, involved in the gluconeogenesis. Catalyzes stereospecifically the conversion of dihydroxyacetone phosphate (DHAP) to D-glyceraldehyde-3-phosphate (G3P). This is Triosephosphate isomerase from Bacillus velezensis (strain DSM 23117 / BGSC 10A6 / LMG 26770 / FZB42) (Bacillus amyloliquefaciens subsp. plantarum).